We begin with the raw amino-acid sequence, 765 residues long: Phosphoribosylformylglycinamidine synthase subunit PurL (765 aa).

Residues 1-13 are compositionally biased toward polar residues; it reads MTVSPTSAPTQAI. Positions 1 to 32 are disordered; the sequence is MTVSPTSAPTQAIDTVERAATTPDEPQPFGEL. Residue His-65 is part of the active site. Tyr-68 and Lys-112 together coordinate ATP. Glu-114 is a Mg(2+) binding site. Substrate-binding positions include 115–118 and Arg-137; that span reads SHNH. His-116 functions as the Proton acceptor in the catalytic mechanism. Residue Asp-138 coordinates Mg(2+). Gln-263 contacts substrate. Residue Asp-291 coordinates Mg(2+). 335 to 337 is a binding site for substrate; it reads ESQ. Asn-523 and Gly-560 together coordinate ATP. Residue Asn-561 coordinates Mg(2+). Position 563 (Ser-563) interacts with substrate.

Belongs to the FGAMS family. In terms of assembly, monomer. Part of the FGAM synthase complex composed of 1 PurL, 1 PurQ and 2 PurS subunits.

The protein localises to the cytoplasm. The catalysed reaction is N(2)-formyl-N(1)-(5-phospho-beta-D-ribosyl)glycinamide + L-glutamine + ATP + H2O = 2-formamido-N(1)-(5-O-phospho-beta-D-ribosyl)acetamidine + L-glutamate + ADP + phosphate + H(+). It participates in purine metabolism; IMP biosynthesis via de novo pathway; 5-amino-1-(5-phospho-D-ribosyl)imidazole from N(2)-formyl-N(1)-(5-phospho-D-ribosyl)glycinamide: step 1/2. Part of the phosphoribosylformylglycinamidine synthase complex involved in the purines biosynthetic pathway. Catalyzes the ATP-dependent conversion of formylglycinamide ribonucleotide (FGAR) and glutamine to yield formylglycinamidine ribonucleotide (FGAM) and glutamate. The FGAM synthase complex is composed of three subunits. PurQ produces an ammonia molecule by converting glutamine to glutamate. PurL transfers the ammonia molecule to FGAR to form FGAM in an ATP-dependent manner. PurS interacts with PurQ and PurL and is thought to assist in the transfer of the ammonia molecule from PurQ to PurL. The sequence is that of Phosphoribosylformylglycinamidine synthase subunit PurL from Mycolicibacterium paratuberculosis (strain ATCC BAA-968 / K-10) (Mycobacterium paratuberculosis).